Reading from the N-terminus, the 431-residue chain is Histidine--tRNA ligase (431 aa).

This sequence belongs to the class-II aminoacyl-tRNA synthetase family. In terms of assembly, homodimer.

Its subcellular location is the cytoplasm. It catalyses the reaction tRNA(His) + L-histidine + ATP = L-histidyl-tRNA(His) + AMP + diphosphate + H(+). The polypeptide is Histidine--tRNA ligase (Neisseria meningitidis serogroup C (strain 053442)).